Reading from the N-terminus, the 229-residue chain is Triosephosphate isomerase (229 aa).

6 to 8 (NLK) serves as a coordination point for substrate. H85 (electrophile) is an active-site residue. E152 (proton acceptor) is an active-site residue. Residues G158 and S188 each coordinate substrate.

The protein belongs to the triosephosphate isomerase family. Homodimer.

It is found in the cytoplasm. The catalysed reaction is D-glyceraldehyde 3-phosphate = dihydroxyacetone phosphate. It participates in carbohydrate biosynthesis; gluconeogenesis. The protein operates within carbohydrate degradation; glycolysis; D-glyceraldehyde 3-phosphate from glycerone phosphate: step 1/1. Involved in the gluconeogenesis. Catalyzes stereospecifically the conversion of dihydroxyacetone phosphate (DHAP) to D-glyceraldehyde-3-phosphate (G3P). This Campylobacter curvus (strain 525.92) protein is Triosephosphate isomerase.